Reading from the N-terminus, the 241-residue chain is Protein McbE (241 aa).

Helical transmembrane passes span 17–35 (TPFSLIWTIMSPTVLFFFL), 54–72 (ISWFVGYISFSVVLFNYCL), 105–123 (LIMSILYVFFFILVVLTGF), 131–149 (IVMIILKSIYINAFMMVSL), 163–181 (STIYSVLITVCMVSGIVSL), and 212–230 (LMTIFFYSIMLIISIISAL).

The protein resides in the cell membrane. Its function is as follows. Together with two further proteins McbF and McbG this protein causes immunity to the peptide antibiotic microcin B17 (MccB17), which inhibits DNA replication in enterobacteriaceae. Immunity is determined by two different mechanisms. McbE is involved in the production of extracellular MccB17 and, in a complex with McbF it also serves as 'pump' for the export of active MccB17 from the cytoplasm to the periplasmic space. The polypeptide is Protein McbE (mcbE) (Escherichia coli).